We begin with the raw amino-acid sequence, 176 residues long: Large ribosomal subunit protein uL22 (176 aa).

The disordered stretch occupies residues 113-176 (VVESRPSKDQ…ETSEAKGGSD (64 aa)). The span at 136–152 (SKAAATAPAKKSSASKA) shows a compositional bias: low complexity. Over residues 159–176 (TKAESKTSETSEAKGGSD) the composition is skewed to basic and acidic residues.

Belongs to the universal ribosomal protein uL22 family. Part of the 50S ribosomal subunit.

Functionally, this protein binds specifically to 23S rRNA; its binding is stimulated by other ribosomal proteins, e.g. L4, L17, and L20. It is important during the early stages of 50S assembly. It makes multiple contacts with different domains of the 23S rRNA in the assembled 50S subunit and ribosome. In terms of biological role, the globular domain of the protein is located near the polypeptide exit tunnel on the outside of the subunit, while an extended beta-hairpin is found that lines the wall of the exit tunnel in the center of the 70S ribosome. This is Large ribosomal subunit protein uL22 from Mycobacterium marinum (strain ATCC BAA-535 / M).